Consider the following 535-residue polypeptide: Growth-regulating factor 2 (535 aa).

In terms of domain architecture, QLQ spans 164–199; the sequence is PFTLTQWAELEQQALIYKYITANVPVPSSLLISIKK. The WRC domain occupies 227–271; the sequence is DPEPGRCRRTDGKKWRCSRDAVPDQKYCERHINRGRHRSRKPVEV. 2 consecutive short sequence motifs (bipartite nuclear localization signal) follow at residues 232–242 and 260–267; these read RCRRTDGKKWR and RGRHRSRK. Disordered regions lie at residues 260 to 308, 417 to 437, and 514 to 535; these read RGRH…ASSN, PIAS…EKTT, and SSVS…HYTT. Residues 272–291 show a composition bias toward polar residues; the sequence is QSGQNQTAAAASKAVTTPQQ. The span at 299–308 shows a compositional bias: low complexity; sequence NRSNARASSN. The segment covering 426 to 437 has biased composition (polar residues); the sequence is THNNNNAQEKTT.

The protein belongs to the GRF family. In terms of assembly, interacts with GIF1. As to expression, strongly expressed in actively growing and developing tissues, such as roots, upper stems, and shoot tips containing the shoot apical meristem (SAM) and flower buds. Detected in young leaf primordium. Also expressed in mature flowers, but weakly expressed in mature stems and leaves.

It localises to the nucleus. Transcription activator that plays a role in the regulation of cell expansion in leaf and cotyledons tissues. Component of a network formed by miR396, the GRFs and their interacting factors (GIFs) acting in the regulation of meristem function, at least partially through the control of cell proliferation. This is Growth-regulating factor 2 (GRF2) from Arabidopsis thaliana (Mouse-ear cress).